The sequence spans 101 residues: Nucleoid-associated protein Acid345_1974 (101 aa).

Belongs to the YbaB/EbfC family. As to quaternary structure, homodimer.

It is found in the cytoplasm. It localises to the nucleoid. Its function is as follows. Binds to DNA and alters its conformation. May be involved in regulation of gene expression, nucleoid organization and DNA protection. The polypeptide is Nucleoid-associated protein Acid345_1974 (Koribacter versatilis (strain Ellin345)).